A 323-amino-acid chain; its full sequence is tRNA U34 carboxymethyltransferase (323 aa).

Carboxy-S-adenosyl-L-methionine-binding positions include Lys-91, Trp-105, Lys-110, Gly-130, 152–154 (DPT), 181–182 (IE), Met-196, Tyr-200, and Arg-315.

The protein belongs to the class I-like SAM-binding methyltransferase superfamily. CmoB family. In terms of assembly, homotetramer.

The enzyme catalyses carboxy-S-adenosyl-L-methionine + 5-hydroxyuridine(34) in tRNA = 5-carboxymethoxyuridine(34) in tRNA + S-adenosyl-L-homocysteine + H(+). Functionally, catalyzes carboxymethyl transfer from carboxy-S-adenosyl-L-methionine (Cx-SAM) to 5-hydroxyuridine (ho5U) to form 5-carboxymethoxyuridine (cmo5U) at position 34 in tRNAs. The sequence is that of tRNA U34 carboxymethyltransferase from Salmonella paratyphi B (strain ATCC BAA-1250 / SPB7).